The sequence spans 117 residues: Probable prefoldin subunit 1 (117 aa).

It belongs to the prefoldin subunit beta family. In terms of assembly, heterohexamer of two PFD-alpha type and four PFD-beta type subunits.

Its subcellular location is the cytoplasm. In terms of biological role, binds specifically to cytosolic chaperonin (c-CPN) and transfers target proteins to it. Binds to nascent polypeptide chain and promotes folding in an environment in which there are many competing pathways for nonnative proteins. Has a role in gonadogenesis. This chain is Probable prefoldin subunit 1 (pfd-1), found in Caenorhabditis briggsae.